Consider the following 1178-residue polypeptide: DNA-directed RNA polymerase I subunit 2 (1178 aa).

The C4-type zinc-finger motif lies at 1097–1137 (CSLCGSLLTSSVVNVQQKKLIQEIGKLPPGRTPKKVTCYSC).

This sequence belongs to the RNA polymerase beta chain family. In terms of assembly, component of the RNA polymerase I (Pol I) complex consisting of at least 13 subunits.

Its subcellular location is the nucleus. The catalysed reaction is RNA(n) + a ribonucleoside 5'-triphosphate = RNA(n+1) + diphosphate. Its function is as follows. DNA-dependent RNA polymerase catalyzes the transcription of DNA into RNA using the four ribonucleoside triphosphates as substrates. Second largest core component of RNA polymerase I which synthesizes ribosomal RNA precursors. Proposed to contribute to the polymerase catalytic activity and forms the polymerase active center together with the largest subunit. Pol I is composed of mobile elements and NRPA2 is part of the core element with the central large cleft and probably a clamp element that moves to open and close the cleft. In terms of biological role, essential for the completion of the three rounds of mitosis in female megaspores required for the development of mature gametophytes. This Arabidopsis thaliana (Mouse-ear cress) protein is DNA-directed RNA polymerase I subunit 2.